A 930-amino-acid chain; its full sequence is Nonribosomal peptide synthetase acyN (930 aa).

Residues 15-436 (LDPQDNKISV…AGRAKETIIV (422 aa)) are adenylation (A) domain. A Carrier domain is found at 567–646 (APSNETEATI…GLAGTLETLM (80 aa)). Serine 604 carries the post-translational modification O-(pantetheine 4'-phosphoryl)serine. A thioesterase (TE) domain region spans residues 665–914 (PLWLVHPGVG…HYTMLGPDNI (250 aa)).

It belongs to the NRP synthetase family.

It carries out the reaction 2 3-phenylpyruvate + 2 ATP = polyporic acid + 2 AMP + 2 diphosphate + H(+). The protein operates within secondary metabolite biosynthesis. Its activity is regulated as follows. Hydroxyphenylpyruvate acts more like a competitive inhibitor rather than a substrate. In terms of biological role, nonribosomal peptide synthetase that mediates the biosynthesis of polyporic acid via the condensation of 2 phenylpyruvate units. Polyporic acid is further hydroxylaed by the cytochrome P450 monooxygenase MO6277 into less toxic ascocorynin. The chain is Nonribosomal peptide synthetase acyN from Ascocoryne sarcoides (Purple jellydisc fungus).